The following is a 756-amino-acid chain: Rab11 family-interacting protein 3 (756 aa).

Positions 1 to 24 (MASAPPASPPGSEPPGPDPEPGGP) are enriched in pro residues. Residues 1 to 204 (MASAPPASPP…SEPVGSQEDG (204 aa)) are disordered. The segment at 2–435 (ASAPPASPPG…RLSSKKVARY (434 aa)) is important for binding to DYNC1LI1. The span at 27-39 (PGAAQLAPGPAEL) shows a compositional bias: low complexity. Position 52 is a phosphoserine (S52). Over residues 53–68 (PGLDEPAPGAAADGGA) the composition is skewed to low complexity. The span at 84 to 94 (DPGPSAPPPRS) shows a compositional bias: pro residues. At S102 the chain carries Phosphoserine; by CDK1. EF-hand domains follow at residues 202-237 (EDGP…YGAE) and 234-269 (YGAE…IRNG). The Ca(2+) site is built by D215, D217, D219, D226, D247, S249, and D258. Phosphoserine occurs at positions 281, 348, 488, 538, 647, and 648. Positions 484-588 (GEQHSRLRQE…LLDEIESLTL (105 aa)) are ARF-binding domain (ABD). A coiled-coil region spans residues 485-694 (EQHSRLRQEN…NGQIITLSIQ (210 aa)). Residues 645 to 664 (RSSSMGLQEYHSRARESELE) are disordered. The span at 654 to 664 (YHSRARESELE) shows a compositional bias: basic and acidic residues. The 63-residue stretch at 694 to 756 (QGAKSLFSTA…ETNPSILEVK (63 aa)) folds into the FIP-RBD domain.

As to quaternary structure, homodimer. Interacts with RAB11A; the interaction is direct and is required for the recruitment to endosomes. Interacts with RAB11B. Forms a ternary complex with RAB11A and dynein intermediate chain DYNC1LI1; RAB11FIP3 links RAB11A to dynein and the interaction regulates endocytic trafficking. Interacts with dynein intermediate chain and dynactin (DCTN1); the interaction activates dynein processivity. Interacts with ARF6 and EXOC7; the interaction serves for recruitment and tethering of recycling endosomes-derived vesicles to the cleavage furrow/midbody. Interacts with RACGAP1/MgcRacGAP; the interaction occurs at late telophase and is required for recruitment and tethering of recycling endosomes-derived vesicles to the cleavage furrow/midbody. Forms a complex with RAB11A and Rabin8/RAB3IP, probably a heterohexamer with two of each protein subunit, where RAB3IP and RAB11FIP3 simultaneously bind to RAB11A; the complex promotes preciliary trafficking. Forms a complex containing RAB11A, ASAP1, RAB3IP, RAP11FIP3 and ARF4; the complex promotes preciliary trafficking; the complex binds to RHO in photoreceptor cells and promotes RHO ciliary transport. Interacts with RAB11FIP4. Interacts with RAB25. In terms of processing, phosphorylated at Ser-102 by CDK1 during metaphase, and dephosphorylated as cells enter telophase.

It is found in the endosome membrane. Its subcellular location is the recycling endosome membrane. It localises to the cytoplasm. The protein localises to the cytoskeleton. The protein resides in the microtubule organizing center. It is found in the centrosome. Its subcellular location is the cleavage furrow. It localises to the midbody. The protein localises to the golgi apparatus membrane. The protein resides in the golgi apparatus. It is found in the trans-Golgi network membrane. In terms of biological role, downstream effector molecule for Rab11 GTPase which is involved in endocytic trafficking, cytokinesis and intracellular ciliogenesis by participating in membrane delivery. Recruited by Rab11 to endosomes where it links Rab11 to dynein motor complex. The functional Rab11-RAB11FIP3-dynein complex regulates the movement of peripheral sorting endosomes (SE) along microtubule tracks toward the microtubule organizing center/centrosome, generating the endocytic recycling compartment (ERC) during interphase of cell cycle. Facilitates the interaction between dynein and dynactin and activates dynein processivity. Binding with ASAP1 is needed to regulate the pericentrosomal localization of recycling endosomes. The Rab11-RAB11FIP3 complex is also implicated in the transport during telophase of vesicles derived from recycling endosomes to the cleavage furrow via centrosome-anchored microtubules, where the vesicles function to deliver membrane during late cytokinesis and abscission. The recruitment of Rab11-RAB11FIP3-containing endosomes to the cleavage furrow and tethering to the midbody is co-mediated by RAB11FIP3 interaction with ARF6-exocyst and RACGAP1-MKLP1 tethering complexes. Also involved in the Rab11-Rabin8-Rab8 ciliogenesis cascade by facilitating the orderly assembly of a ciliary targeting complex containing Rab11, ASAP1, Rabin8/RAB3IP, RAB11FIP3 and ARF4, which directs preciliary vesicle trafficking to mother centriole and ciliogenesis initiation. Also promotes the activity of Rab11 and ASAP1 in the ARF4-dependent Golgi-to-cilia transport of the sensory receptor rhodopsin. Competes with WDR44 for binding to Rab11, which controls intracellular ciliogenesis pathway. May play a role in breast cancer cell motility by regulating actin cytoskeleton. The sequence is that of Rab11 family-interacting protein 3 from Homo sapiens (Human).